The chain runs to 613 residues: Phostensin (613 aa).

Over residues 15–33 the composition is skewed to basic and acidic residues; the sequence is RRQEEASVRGREKAERERL. Disordered stretches follow at residues 15–231 and 266–505; these read RRQE…SAYQ and GEER…GKKR. Phosphoserine is present on residues Ser-54, Ser-125, Ser-133, Ser-175, and Ser-195. Composition is skewed to basic and acidic residues over residues 104–154 and 167–191; these read RSEE…ERRL and LEARDWRQSPGEVGDRSSRLSEPWK. Thr-199 carries the phosphothreonine modification. Over residues 199-221 the composition is skewed to basic and acidic residues; the sequence is TPERSLRLAESREQSPRRKEVES. Ser-224 is subject to Phosphoserine. Positions 266–282 are enriched in basic and acidic residues; that stretch reads GEERQGYSEKCGRKEEW. Residues 301 to 310 show a composition bias toward polar residues; it reads REAQGSSSTG. 3 stretches are compositionally biased toward basic and acidic residues: residues 314–327, 340–350, and 357–367; these read AEQRPVEDGERGMK, KAREWTPRDIE, and EPSESAEKRLE. Ser-368 and Ser-432 each carry phosphoserine. Over residues 424 to 446 the composition is skewed to pro residues; it reads QPPPPAPLSPPPPAPTAPQPPGD. Lys-457 carries the post-translational modification N6-acetyllysine. Low complexity predominate over residues 476-499; it reads PRRSVPPTTPATPTSPATADAAVP. Residues Ser-490 and Ser-530 each carry the phosphoserine modification. Positions 552–594 are disordered; that stretch reads QYPSESSVLEELGPEPEVPSAPNPPAAQPDDEEDEEELLLLQP. The segment covering 567–578 has biased composition (pro residues); the sequence is PEVPSAPNPPAA. Positions 580-589 are enriched in acidic residues; that stretch reads PDDEEDEEEL.

In terms of assembly, interacts with Protein phosphatase 1 (PP1).

It localises to the cytoplasm. The protein localises to the cytoskeleton. In terms of biological role, may target protein phosphatase 1 to F-actin cytoskeleton. The chain is Phostensin (PPP1R18) from Macaca mulatta (Rhesus macaque).